A 160-amino-acid chain; its full sequence is Archaemetzincin (160 aa).

Residue His117 participates in Zn(2+) binding. The active-site Proton acceptor is Glu118. Zn(2+) is bound by residues His121, His127, Cys128, Cys132, Cys151, and Cys154.

This sequence belongs to the peptidase M54 family. Monomer. The cofactor is Zn(2+).

Its function is as follows. Probable zinc metalloprotease whose natural substrate is unknown. The protein is Archaemetzincin of Archaeoglobus fulgidus (strain ATCC 49558 / DSM 4304 / JCM 9628 / NBRC 100126 / VC-16).